The chain runs to 179 residues: Large ribosomal subunit protein uL6 (179 aa).

The protein belongs to the universal ribosomal protein uL6 family. As to quaternary structure, part of the 50S ribosomal subunit.

This protein binds to the 23S rRNA, and is important in its secondary structure. It is located near the subunit interface in the base of the L7/L12 stalk, and near the tRNA binding site of the peptidyltransferase center. The chain is Large ribosomal subunit protein uL6 from Prochlorococcus marinus (strain MIT 9211).